The following is a 184-amino-acid chain: NADH-quinone oxidoreductase subunit B (184 aa).

4 residues coordinate [4Fe-4S] cluster: Cys-37, Cys-38, Cys-103, and Cys-132.

The protein belongs to the complex I 20 kDa subunit family. NDH-1 is composed of 14 different subunits. Subunits NuoB, C, D, E, F, and G constitute the peripheral sector of the complex. [4Fe-4S] cluster serves as cofactor.

It is found in the cell membrane. The catalysed reaction is a quinone + NADH + 5 H(+)(in) = a quinol + NAD(+) + 4 H(+)(out). Functionally, NDH-1 shuttles electrons from NADH, via FMN and iron-sulfur (Fe-S) centers, to quinones in the respiratory chain. The immediate electron acceptor for the enzyme in this species is believed to be a menaquinone. Couples the redox reaction to proton translocation (for every two electrons transferred, four hydrogen ions are translocated across the cytoplasmic membrane), and thus conserves the redox energy in a proton gradient. The polypeptide is NADH-quinone oxidoreductase subunit B (Nocardia farcinica (strain IFM 10152)).